Here is a 286-residue protein sequence, read N- to C-terminus: Bark agglutinin I polypeptide B (286 aa).

The first 31 residues, 1-31, serve as a signal peptide directing secretion; it reads MASYKFKTQNSFLLLLSISFFFLLLLNKVNS. N148 is a glycosylation site (N-linked (GlcNAc...) asparagine). 2 residues coordinate Mn(2+): E157 and D159. Residues D159, N163, and D167 each contribute to the Ca(2+) site. Residues D167 and H172 each coordinate Mn(2+).

It belongs to the leguminous lectin family. As to quaternary structure, RPbAI is composed of two polypeptides, A and B, that associate into five different tetrameric isolectins. The A4 combination is the only one devoid of agglutination activity. Isoform B4 displays maximal agglutination activity. Mostly in the axial and ray parenchymal cells of the inner bark. Fewer in the axial and ray parenchymal cells of the xylem. Strong expression in bark. The lectin accumulates in the inner bark in autumn and winter and disappears in may.

Functionally, bark lectins are storage proteins that probably maintain stocks of nitrogen during dormant period. Self-aggregatable molecules that can bind their own carbohydrate side chains. They could also play a role in the plant's defense against phytophagous invertebrates or herbivorous higher animals. The chain is Bark agglutinin I polypeptide B from Robinia pseudoacacia (Black locust).